Here is a 187-residue protein sequence, read N- to C-terminus: Ribosome-recycling factor (187 aa).

Belongs to the RRF family.

It localises to the cytoplasm. Responsible for the release of ribosomes from messenger RNA at the termination of protein biosynthesis. May increase the efficiency of translation by recycling ribosomes from one round of translation to another. This is Ribosome-recycling factor from Lactiplantibacillus plantarum (strain ATCC BAA-793 / NCIMB 8826 / WCFS1) (Lactobacillus plantarum).